Reading from the N-terminus, the 66-residue chain is Neurotoxin BmK AGP-SYPU1 (66 aa).

An LCN-type CS-alpha/beta domain is found at 2–64; it reads RDAYIAQNYN…KPIRIPGKCH (63 aa). Disulfide bonds link cysteine 12-cysteine 63, cysteine 16-cysteine 36, cysteine 22-cysteine 46, and cysteine 26-cysteine 48. A propeptide spans 65-66 (removed by a carboxypeptidase); sequence RR.

In terms of tissue distribution, expressed by the venom gland.

Its subcellular location is the secreted. Its function is as follows. Alpha toxins bind voltage-independently at site-3 of sodium channels (Nav) and inhibit the inactivation of the activated channels, thereby blocking neuronal transmission. This toxin has a strong analgesic effect when administered to mice by intraperitoneal injection. The protein is Neurotoxin BmK AGP-SYPU1 of Olivierus martensii (Manchurian scorpion).